The following is a 372-amino-acid chain: Cytochrome b (372 aa).

The next 4 membrane-spanning stretches (helical) occupy residues 25–45 (FGSMLLTCLALQTMTGFFLAI), 69–90 (WMMQNLHAIGASMFFICIYIHI), 105–125 (WLSGTTLLIILMATAFFGYVL), and 170–190 (FFALHFILPFTIISMSSIHIM). Heme b is bound by residues histidine 75 and histidine 89. The heme b site is built by histidine 174 and histidine 188. Histidine 193 serves as a coordination point for a ubiquinone. Transmembrane regions (helical) follow at residues 218-238 (HKDMLMFTIMITMLFIIMSFT), 280-300 (LGGTVALVLSVTILLTMPFTH), 312-332 (LMQFMFWTLVATFITITWAAT), and 339-358 (FTSIGQVTAILYFLFFTMNP).

Belongs to the cytochrome b family. The cytochrome bc1 complex contains 3 respiratory subunits (MT-CYB, CYC1 and UQCRFS1), 2 core proteins (UQCRC1 and UQCRC2) and probably 6 low-molecular weight proteins. It depends on heme b as a cofactor.

It localises to the mitochondrion inner membrane. Functionally, component of the ubiquinol-cytochrome c reductase complex (complex III or cytochrome b-c1 complex) that is part of the mitochondrial respiratory chain. The b-c1 complex mediates electron transfer from ubiquinol to cytochrome c. Contributes to the generation of a proton gradient across the mitochondrial membrane that is then used for ATP synthesis. In Pantherophis vulpinus (Western fox snake), this protein is Cytochrome b (MT-CYB).